Here is a 72-residue protein sequence, read N- to C-terminus: Mitotic-spindle organizing protein 1 (72 aa).

The protein belongs to the MOZART1 family. In terms of assembly, part of the gamma-tubulin complex.

It is found in the cytoplasm. It localises to the cytoskeleton. The protein localises to the microtubule organizing center. The protein resides in the spindle pole body. In terms of biological role, required for gamma-tubulin complex recruitment to the microtubule organizing center (MTOC). In Coccidioides immitis (strain RS) (Valley fever fungus), this protein is Mitotic-spindle organizing protein 1.